Here is a 29-residue protein sequence, read N- to C-terminus: Cytochrome b6-f complex subunit 8 (29 aa).

The helical transmembrane segment at 3-23 threads the bilayer; that stretch reads IVSLAWAALMIVFTFSLSLVV.

Belongs to the PetN family. The 4 large subunits of the cytochrome b6-f complex are cytochrome b6, subunit IV (17 kDa polypeptide, PetD), cytochrome f and the Rieske protein, while the 4 small subunits are PetG, PetL, PetM and PetN. The complex functions as a dimer.

It is found in the plastid membrane. In terms of biological role, component of the cytochrome b6-f complex, which mediates electron transfer between photosystem II (PSII) and photosystem I (PSI), cyclic electron flow around PSI, and state transitions. This Cuscuta exaltata (Tall dodder) protein is Cytochrome b6-f complex subunit 8.